A 982-amino-acid chain; its full sequence is Serine/threonine-protein kinase SULU (982 aa).

The Protein kinase domain occupies 30 to 289; sequence YQDLREIGHG…AEECFRHPFI (260 aa). ATP contacts are provided by residues 36 to 44 and Lys-59; that span reads IGHGSFGAV. Asp-153 functions as the Proton acceptor in the catalytic mechanism. 4 disordered regions span residues 331-484, 592-620, 751-789, and 957-982; these read GKEG…PLDT, QNNELDKRKKDIEDGEKKMKKTKNSQNQQ, LETQHEAESASQNEYTQRQQDELRKKHAMQSRQQPRDLK, and RTGSTSRSSGGIAPGVGNSSSIQMAM. The segment covering 353-373 has biased composition (low complexity); that stretch reads SIGRAGDSASSRSASLTSFRS. Polar residues predominate over residues 421–431; the sequence is QMLSSTSTSGV. The span at 459–472 shows a compositional bias: low complexity; the sequence is IPTSQPTSKSESSS. Over residues 595 to 608 the composition is skewed to basic and acidic residues; that stretch reads ELDKRKKDIEDGEK. The segment covering 759-768 has biased composition (polar residues); sequence SASQNEYTQR. Residues 957–967 are compositionally biased toward low complexity; it reads RTGSTSRSSGG. Over residues 973–982 the composition is skewed to polar residues; the sequence is GNSSSIQMAM.

The protein belongs to the protein kinase superfamily. Ser/Thr protein kinase family. STE20 subfamily. Mg(2+) is required as a cofactor. Expressed in the pharynx, including the pharyngeal muscle of the metacorpus, the isthmus, and the terminal bulb; in the intestine, including the pharyngeointestinal valve between the pharynx and the intestine, a structure near the anus likely to be the anal sphincter and the excretory cell and in several ring neurons.

It localises to the cytoplasm. Its subcellular location is the cytoskeleton. The protein resides in the cell cortex. The catalysed reaction is L-seryl-[protein] + ATP = O-phospho-L-seryl-[protein] + ADP + H(+). The enzyme catalyses L-threonyl-[protein] + ATP = O-phospho-L-threonyl-[protein] + ADP + H(+). Its function is as follows. Acts as a negative regulator of cortical contractions during early embryonic cell division, possibly by regulating rho-1-dependent actomyosin contractility. Plays a role in polarity establishment in early embryos by regulating the size of the anterior and posterior cortex in the first asymmetric cell division. Might play a role in cell cycle progression. In the germline, involved in the regulation of meiotic progression during oogenesis, possibly by modulating the timing of mpk-1 activation. Plays a role in meiotic recombination events. Involved in pharyngeal pumping. The chain is Serine/threonine-protein kinase SULU (kin-18) from Caenorhabditis elegans.